The following is a 93-amino-acid chain: U11-ctenitoxin-Pn1a (93 aa).

Positions 1–21 are cleaved as a signal peptide; the sequence is MKCAVLFLSVIALVHIFVVEA. The propeptide occupies 22–34; it reads EEEPDSDALVPQE. 5 cysteine pairs are disulfide-bonded: C37/C51, C44/C57, C50/C75, C59/C73, and C83/C90.

The protein belongs to the neurotoxin 09 (Tx3-6) family. Expressed by the venom gland.

It is found in the secreted. Functionally, probable neurotoxin. The protein is U11-ctenitoxin-Pn1a of Phoneutria nigriventer (Brazilian armed spider).